We begin with the raw amino-acid sequence, 472 residues long: N(6)-adenine-specific methyltransferase METTL4 (472 aa).

This sequence belongs to the MT-A70-like family.

The protein localises to the nucleus. Its subcellular location is the cytoplasm. It is found in the cytosol. The protein resides in the mitochondrion matrix. The enzyme catalyses a 2'-O-methyladenosine in U2 snRNA + S-adenosyl-L-methionine = an N(6)-methyl-2'-O-methyladenosine in U2 snRNA + S-adenosyl-L-homocysteine + H(+). The catalysed reaction is a 2'-deoxyadenosine in DNA + S-adenosyl-L-methionine = an N(6)-methyl-2'-deoxyadenosine in DNA + S-adenosyl-L-homocysteine + H(+). Its function is as follows. N(6)-adenine-specific methyltransferase that can methylate both RNAs and DNA. Acts as a N(6)-adenine-specific RNA methyltransferase by catalyzing formation of N6,2'-O-dimethyladenosine (m6A(m)) on internal positions of U2 small nuclear RNA (snRNA): methylates the 6th position of adenine residues with a pre-deposited 2'-O-methylation. Internal m6A(m) methylation of snRNAs regulates RNA splicing. Also able to act as a N(6)-adenine-specific DNA methyltransferase by mediating methylation of DNA on the 6th position of adenine (N(6)-methyladenosine). The existence of N(6)-methyladenosine (m6A) on DNA is however unclear in mammals, and additional evidences are required to confirm the role of the N(6)-adenine-specific DNA methyltransferase activity of METTL4 in vivo. Acts as a regulator of mitochondrial transcript levels and mitochondrial DNA (mtDNA) copy number by mediating mtDNA N(6)-methylation: m6A on mtDNA reduces transcription by repressing TFAM DNA-binding and bending. N(6)-methyladenosine deposition by METTL4 regulates Polycomb silencing by triggering ubiquitination and degradation of sensor proteins ASXL1 and MPND, leading to inactivation of the PR-DUB complex and subsequent preservation of Polycomb silencing. The protein is N(6)-adenine-specific methyltransferase METTL4 of Homo sapiens (Human).